A 407-amino-acid chain; its full sequence is Peptidase T (407 aa).

Histidine 82 contributes to the Zn(2+) binding site. Aspartate 84 is a catalytic residue. A Zn(2+)-binding site is contributed by aspartate 143. The active-site Proton acceptor is glutamate 177. Zn(2+) is bound by residues glutamate 178, aspartate 200, and histidine 382.

Belongs to the peptidase M20B family. The cofactor is Zn(2+).

The protein localises to the cytoplasm. The enzyme catalyses Release of the N-terminal residue from a tripeptide.. Cleaves the N-terminal amino acid of tripeptides. This Streptococcus thermophilus (strain ATCC BAA-491 / LMD-9) protein is Peptidase T.